The sequence spans 135 residues: UPF0355 protein SACOL0457 (135 aa).

The protein belongs to the UPF0355 family.

The sequence is that of UPF0355 protein SACOL0457 from Staphylococcus aureus (strain COL).